Reading from the N-terminus, the 205-residue chain is Small ribosomal subunit protein uS4 (205 aa).

The tract at residues 18–46 is disordered; that stretch reads NIWGRPKSPVNRREYGPGQHGQRRKGKLS. One can recognise an S4 RNA-binding domain in the interval 94-154; it reads RRLDTVVFRA…EASKQLAVVL (61 aa).

The protein belongs to the universal ribosomal protein uS4 family. Part of the 30S ribosomal subunit. Contacts protein S5. The interaction surface between S4 and S5 is involved in control of translational fidelity.

Its function is as follows. One of the primary rRNA binding proteins, it binds directly to 16S rRNA where it nucleates assembly of the body of the 30S subunit. With S5 and S12 plays an important role in translational accuracy. In Bradyrhizobium sp. (strain ORS 278), this protein is Small ribosomal subunit protein uS4.